We begin with the raw amino-acid sequence, 121 residues long: Large ribosomal subunit protein bL12 (121 aa).

Belongs to the bacterial ribosomal protein bL12 family. Homodimer. Part of the ribosomal stalk of the 50S ribosomal subunit. Forms a multimeric L10(L12)X complex, where L10 forms an elongated spine to which 2 to 4 L12 dimers bind in a sequential fashion. Binds GTP-bound translation factors.

Functionally, forms part of the ribosomal stalk which helps the ribosome interact with GTP-bound translation factors. Is thus essential for accurate translation. The chain is Large ribosomal subunit protein bL12 from Pediococcus pentosaceus (strain ATCC 25745 / CCUG 21536 / LMG 10740 / 183-1w).